Reading from the N-terminus, the 381-residue chain is Probable tRNA sulfurtransferase (381 aa).

The THUMP domain maps to 52–155 (LTNLDALKYV…DASTYIFIDY (104 aa)). ATP contacts are provided by residues 173–174 (LM), 198–199 (NF), Arg255, Gly277, and Gln286.

This sequence belongs to the ThiI family.

It is found in the cytoplasm. The catalysed reaction is [ThiI sulfur-carrier protein]-S-sulfanyl-L-cysteine + a uridine in tRNA + 2 reduced [2Fe-2S]-[ferredoxin] + ATP + H(+) = [ThiI sulfur-carrier protein]-L-cysteine + a 4-thiouridine in tRNA + 2 oxidized [2Fe-2S]-[ferredoxin] + AMP + diphosphate. The enzyme catalyses [ThiS sulfur-carrier protein]-C-terminal Gly-Gly-AMP + S-sulfanyl-L-cysteinyl-[cysteine desulfurase] + AH2 = [ThiS sulfur-carrier protein]-C-terminal-Gly-aminoethanethioate + L-cysteinyl-[cysteine desulfurase] + A + AMP + 2 H(+). It participates in cofactor biosynthesis; thiamine diphosphate biosynthesis. Catalyzes the ATP-dependent transfer of a sulfur to tRNA to produce 4-thiouridine in position 8 of tRNAs, which functions as a near-UV photosensor. Also catalyzes the transfer of sulfur to the sulfur carrier protein ThiS, forming ThiS-thiocarboxylate. This is a step in the synthesis of thiazole, in the thiamine biosynthesis pathway. The sulfur is donated as persulfide by IscS. This is Probable tRNA sulfurtransferase from Metamycoplasma arthritidis (strain 158L3-1) (Mycoplasma arthritidis).